The chain runs to 155 residues: Ribosomal RNA large subunit methyltransferase H (155 aa).

Residues Leu73, Gly104, and 123 to 128 (LSALTL) contribute to the S-adenosyl-L-methionine site.

It belongs to the RNA methyltransferase RlmH family. As to quaternary structure, homodimer.

Its subcellular location is the cytoplasm. It carries out the reaction pseudouridine(1915) in 23S rRNA + S-adenosyl-L-methionine = N(3)-methylpseudouridine(1915) in 23S rRNA + S-adenosyl-L-homocysteine + H(+). Functionally, specifically methylates the pseudouridine at position 1915 (m3Psi1915) in 23S rRNA. The sequence is that of Ribosomal RNA large subunit methyltransferase H from Coxiella burnetii (strain Dugway 5J108-111).